Here is a 536-residue protein sequence, read N- to C-terminus: Glycine--tRNA ligase (536 aa).

An insert region spans residues 56–67; it reads LVSPAGAPSTFE. Arginine 106 and glutamate 213 together coordinate substrate. ATP is bound by residues 245 to 247, 255 to 260, and 333 to 334; these read RNE, FRSREF, and EL. Substrate is bound at residue 260–264; that stretch reads FEQME. The insert stretch occupies residues 350–372; sequence EGKLDPATNPMTVELNEHGKPKH. 396-400 lines the substrate pocket; the sequence is EPSAG. Position 400 to 403 (400 to 403) interacts with ATP; that stretch reads GADR.

It belongs to the class-II aminoacyl-tRNA synthetase family. In terms of assembly, homodimer.

The protein localises to the cytoplasm. It catalyses the reaction tRNA(Gly) + glycine + ATP = glycyl-tRNA(Gly) + AMP + diphosphate. Its function is as follows. Catalyzes the attachment of glycine to tRNA(Gly). The polypeptide is Glycine--tRNA ligase (Rhodopirellula baltica (strain DSM 10527 / NCIMB 13988 / SH1)).